The following is a 107-amino-acid chain: Nucleoid-associated protein mlr5504 (107 aa).

It belongs to the YbaB/EbfC family. As to quaternary structure, homodimer.

The protein resides in the cytoplasm. The protein localises to the nucleoid. Binds to DNA and alters its conformation. May be involved in regulation of gene expression, nucleoid organization and DNA protection. This chain is Nucleoid-associated protein mlr5504, found in Mesorhizobium japonicum (strain LMG 29417 / CECT 9101 / MAFF 303099) (Mesorhizobium loti (strain MAFF 303099)).